Consider the following 902-residue polypeptide: Transcription factor E2F7 (902 aa).

A Phosphoserine modification is found at Ser96. Residues 143 to 212 (RKQKSLGLLC…VAKNQYGWHG (70 aa)) mediate DNA binding. Basic and acidic residues predominate over residues 253 to 269 (ERRKDGSPDPRDQHLLD). A disordered region spans residues 253-283 (ERRKDGSPDPRDQHLLDFSESDYPSSSANSR). The DNA-binding element occupies 283–368 (RKDKSLRIMS…GRKPAFKWIG (86 aa)). Ser411 bears the Phosphoserine mark. 3 disordered regions span residues 418–439 (SEKI…KQGP), 589–627 (LCEE…SNST), and 665–690 (NGFI…DNEI). 2 stretches are compositionally biased toward basic and acidic residues: residues 589–611 (LCEE…REFE) and 679–690 (PDTEKSSNDNEI). Ser832 bears the Phosphoserine mark. The tract at residues 844 to 902 (KAEQSPAPATPKSIQRRHRETFFKTPGSLGDPAFRRERNQSRNTSSAQRRLEISSSGPD) is disordered. The span at 884-902 (SRNTSSAQRRLEISSSGPD) shows a compositional bias: polar residues.

It belongs to the E2F/DP family. Homodimer and heterodimer: mainly forms homodimers and, to a lesser extent, heterodimers with E2F8. Dimerization is important for DNA-binding. Interacts with HIF1A. Interacts with MN1.

It is found in the nucleus. Functionally, atypical E2F transcription factor that participates in various processes such as angiogenesis, polyploidization of specialized cells and DNA damage response. Mainly acts as a transcription repressor that binds DNA independently of DP proteins and specifically recognizes the E2 recognition site 5'-TTTC[CG]CGC-3'. Directly represses transcription of classical E2F transcription factors such as E2F1. Acts as a regulator of S-phase by recognizing and binding the E2-related site 5'-TTCCCGCC-3' and mediating repression of G1/S-regulated genes. Plays a key role in polyploidization of cells in placenta and liver by regulating the endocycle, probably by repressing genes promoting cytokinesis and antagonizing action of classical E2F proteins (E2F1, E2F2 and/or E2F3). Required for placental development by promoting polyploidization of trophoblast giant cells. Also involved in DNA damage response: up-regulated by p53/TP53 following genotoxic stress and acts as a downstream effector of p53/TP53-dependent repression by mediating repression of indirect p53/TP53 target genes involved in DNA replication. Acts as a promoter of sprouting angiogenesis, possibly by acting as a transcription activator: associates with HIF1A, recognizes and binds the VEGFA promoter, which is different from canonical E2 recognition site, and activates expression of the VEGFA gene. Acts as a negative regulator of keratinocyte differentiation. This is Transcription factor E2F7 (E2f7) from Rattus norvegicus (Rat).